Here is a 371-residue protein sequence, read N- to C-terminus: tRNA-specific 2-thiouridylase MnmA (371 aa).

ATP is bound by residues 14 to 21 (GMSGGVDS) and Met-40. An interaction with target base in tRNA region spans residues 100–102 (NPD). Residue Cys-105 is the Nucleophile of the active site. A disulfide bridge links Cys-105 with Cys-205. Residue Gly-129 participates in ATP binding. The interval 155 to 157 (KDQ) is interaction with tRNA. The active-site Cysteine persulfide intermediate is Cys-205. An interaction with tRNA region spans residues 321 to 322 (RY).

Belongs to the MnmA/TRMU family.

Its subcellular location is the cytoplasm. It carries out the reaction S-sulfanyl-L-cysteinyl-[protein] + uridine(34) in tRNA + AH2 + ATP = 2-thiouridine(34) in tRNA + L-cysteinyl-[protein] + A + AMP + diphosphate + H(+). In terms of biological role, catalyzes the 2-thiolation of uridine at the wobble position (U34) of tRNA, leading to the formation of s(2)U34. The chain is tRNA-specific 2-thiouridylase MnmA from Bordetella parapertussis (strain 12822 / ATCC BAA-587 / NCTC 13253).